We begin with the raw amino-acid sequence, 325 residues long: Beta-ketoacyl-[acyl-carrier-protein] synthase III (325 aa).

Active-site residues include Cys-112 and His-250. The interval 251-255 is ACP-binding; it reads QANIR. Asn-280 is a catalytic residue.

The protein belongs to the thiolase-like superfamily. FabH family. In terms of assembly, homodimer.

It is found in the cytoplasm. It carries out the reaction malonyl-[ACP] + acetyl-CoA + H(+) = 3-oxobutanoyl-[ACP] + CO2 + CoA. The protein operates within lipid metabolism; fatty acid biosynthesis. Its function is as follows. Catalyzes the condensation reaction of fatty acid synthesis by the addition to an acyl acceptor of two carbons from malonyl-ACP. Catalyzes the first condensation reaction which initiates fatty acid synthesis and may therefore play a role in governing the total rate of fatty acid production. Possesses both acetoacetyl-ACP synthase and acetyl transacylase activities. Its substrate specificity determines the biosynthesis of branched-chain and/or straight-chain of fatty acids. This chain is Beta-ketoacyl-[acyl-carrier-protein] synthase III, found in Clostridium acetobutylicum (strain ATCC 824 / DSM 792 / JCM 1419 / IAM 19013 / LMG 5710 / NBRC 13948 / NRRL B-527 / VKM B-1787 / 2291 / W).